Consider the following 291-residue polypeptide: E3 ubiquitin-protein ligase RZFP34 (291 aa).

The segment at 20–96 (IGSGHYGCSH…VQQNCSNCGV (77 aa)) adopts a CHY-type zinc-finger fold. Residues cysteine 27, histidine 29, cysteine 40, cysteine 41, cysteine 47, cysteine 50, histidine 51, histidine 66, cysteine 78, cysteine 81, cysteine 91, cysteine 94, cysteine 103, cysteine 106, histidine 119, cysteine 120, cysteine 123, cysteine 126, histidine 136, cysteine 137, cysteine 140, cysteine 143, histidine 152, and cysteine 154 each coordinate Zn(2+). The CTCHY-type zinc-finger motif lies at 98–162 (MGKYFCSKCK…QCVEGAMHHN (65 aa)). The RING-type; atypical zinc finger occupies 163-206 (CPVCFEYLFDSTRDITVLRCGHTMHLECTKDMGLHNRYTCPVCS). The residue at position 173 (serine 173) is a Phosphoserine. Residue threonine 178 is modified to Phosphothreonine. Residue serine 208 is modified to Phosphoserine. A disordered region spans residues 271-291 (QRGSDSHSCSSGMPQVVGSTG).

As to quaternary structure, interacts with SRK2D/2SNRK2.2, SRK2I/SNRK2.3 and SRK2E/SNRK2.6. Phosphorylated at Ser-173, Thr-178 and Ser-208 by SRK2E/SNRK2.6 in response to abscisic acid (ABA). Phosphorylation activates its E3 ubiquitin-protein ligase activity. Expressed in roots, leaves, and anthers and stigma of open flowers.

The protein localises to the nucleus. Its subcellular location is the cytoplasm. The protein resides in the endoplasmic reticulum. It catalyses the reaction S-ubiquitinyl-[E2 ubiquitin-conjugating enzyme]-L-cysteine + [acceptor protein]-L-lysine = [E2 ubiquitin-conjugating enzyme]-L-cysteine + N(6)-ubiquitinyl-[acceptor protein]-L-lysine.. It functions in the pathway protein modification; protein ubiquitination. Its function is as follows. Possesses E3 ubiquitin-protein ligase activity in vitro. Mediates mainly 'Lys-48'-linked polyubiquitination. Promotes abscisic acid (ABA)-induced stomatal closure, reactive oxygen species (ROS) production and drought tolerance. Involved in the regulation of stomatal aperture. The sequence is that of E3 ubiquitin-protein ligase RZFP34 from Arabidopsis thaliana (Mouse-ear cress).